Here is a 388-residue protein sequence, read N- to C-terminus: L-lactate dehydrogenase (388 aa).

In terms of domain architecture, FMN hydroxy acid dehydrogenase spans 1 to 380 (MIISSSSDYR…SRDSLVREIE (380 aa)). Tyr24 contributes to the substrate binding site. Residues Ser106 and Gln127 each coordinate FMN. Tyr129 serves as a coordination point for substrate. Thr155 is a binding site for FMN. Arg164 is a substrate binding site. Lys251 contributes to the FMN binding site. His275 serves as the catalytic Proton acceptor. Position 278 (Arg278) interacts with substrate. 306–330 (DSGIRSGLDVVRMLAQGADGVLLGR) lines the FMN pocket.

This sequence belongs to the FMN-dependent alpha-hydroxy acid dehydrogenase family. Requires FMN as cofactor.

The protein localises to the cell inner membrane. The catalysed reaction is (S)-lactate + A = pyruvate + AH2. Catalyzes the conversion of L-lactate to pyruvate. Is coupled to the respiratory chain. This is L-lactate dehydrogenase from Xanthobacter autotrophicus (strain ATCC BAA-1158 / Py2).